The primary structure comprises 430 residues: Cell division protein FtsZ (430 aa).

GTP-binding positions include 76-80 (GGGCN), 163-165 (GTG), glutamate 194, arginine 198, and aspartate 242. Residues 374 to 418 (KEKPQAKTSSKPVLSGPPAGVETVPSTTTPEDPLGEIPMAPELDI) form a disordered region.

Belongs to the FtsZ family. Homodimer. Polymerizes to form a dynamic ring structure in a strictly GTP-dependent manner. Interacts directly with several other division proteins.

The protein resides in the cytoplasm. Essential cell division protein that forms a contractile ring structure (Z ring) at the future cell division site. The regulation of the ring assembly controls the timing and the location of cell division. One of the functions of the FtsZ ring is to recruit other cell division proteins to the septum to produce a new cell wall between the dividing cells. Binds GTP and shows GTPase activity. The protein is Cell division protein FtsZ of Synechocystis sp. (strain ATCC 27184 / PCC 6803 / Kazusa).